A 369-amino-acid chain; its full sequence is MELATREKVNEVLFMNRGEGESSYAQNSSFTQQVASMAQPALENAVETLFSKDFHLQALNAADLGCAAGPNTFAVISTIKRMMEKKCRELNCQTLELQVYLNDLFGNDFNTLFKGLSSEVIGNKCEEVPCYVMGVPGSFHGRLFPRNSLHLVYSSYSVHWLTQAPKGLTSREGLALNKGKIYISKTSPPVVREAYLSQFHEDFTMFLNYRSQEMVPNGCMVLILRGRQCFDPSDMQSCFTWELLALAIAELVSQGLIDEDKLDTFNIPSYFASLEEVKDIVERDGSFTIDHIEGFDLDSVEMQENDKWVRGEKFTKVVRAFSEPIISSQFGHEIMDKLYDKFTHIVVSDLEAKLPKTTSIILVLSKIVG.

Tyr-24 serves as a coordination point for S-adenosyl-L-homocysteine. A caffeine-binding site is contributed by Thr-31. 6 residues coordinate S-adenosyl-L-homocysteine: Cys-66, Asn-71, Asp-103, Leu-104, Ser-138, and Phe-139. Caffeine is bound by residues Tyr-156, His-159, and Trp-160. Asn-177 provides a ligand contact to Mg(2+). Caffeine is bound at residue Arg-225. Positions 263, 265, and 266 each coordinate Mg(2+). Phe-321 provides a ligand contact to caffeine.

Belongs to the methyltransferase superfamily. Type-7 methyltransferase family. Mg(2+) serves as cofactor.

The enzyme catalyses 1,7-dimethylxanthine + S-adenosyl-L-methionine = caffeine + S-adenosyl-L-homocysteine + H(+). The catalysed reaction is theobromine + S-adenosyl-L-methionine = caffeine + S-adenosyl-L-homocysteine + H(+). It catalyses the reaction 7-methylxanthine + S-adenosyl-L-methionine = theobromine + S-adenosyl-L-homocysteine + H(+). It functions in the pathway alkaloid biosynthesis. Its function is as follows. Involved in the biosynthesis of caffeine in cv. Puer. Involved in the biosynthesis of theacrine in cv. Kucha, a caffeine-like xanthine alkaloid with diverse beneficial biological activities including anti-depressive, sedative, and hypnotic activities, improving learning and memory, increasing exercise activity, and preventing nonalcoholic fatty liver disease. Catalyzes the conversion of 7-methylxanthine (7mX) to theobromine and of theobromine to caffeine. Has 3-N- and 1-N-methylation activity. This is 3,7-dimethylxanthine N-methyltransferase TCS1 from Camellia sinensis var. assamica (Assam tea).